A 292-amino-acid polypeptide reads, in one-letter code: Acetylglutamate kinase (292 aa).

Substrate is bound by residues 64–65 (GG), Arg-86, and Asn-190.

The protein belongs to the acetylglutamate kinase family. ArgB subfamily.

The protein resides in the cytoplasm. It carries out the reaction N-acetyl-L-glutamate + ATP = N-acetyl-L-glutamyl 5-phosphate + ADP. It functions in the pathway amino-acid biosynthesis; L-arginine biosynthesis; N(2)-acetyl-L-ornithine from L-glutamate: step 2/4. In terms of biological role, catalyzes the ATP-dependent phosphorylation of N-acetyl-L-glutamate. This is Acetylglutamate kinase from Citrifermentans bemidjiense (strain ATCC BAA-1014 / DSM 16622 / JCM 12645 / Bem) (Geobacter bemidjiensis).